The primary structure comprises 106 residues: Small ribosomal subunit protein uS10 (106 aa).

Belongs to the universal ribosomal protein uS10 family. As to quaternary structure, part of the 30S ribosomal subunit.

Its function is as follows. Involved in the binding of tRNA to the ribosomes. This is Small ribosomal subunit protein uS10 from Solibacter usitatus (strain Ellin6076).